We begin with the raw amino-acid sequence, 77 residues long: Translational regulator CsrA (77 aa).

The protein belongs to the CsrA/RsmA family. In terms of assembly, homodimer; the beta-strands of each monomer intercalate to form a hydrophobic core, while the alpha-helices form wings that extend away from the core.

It is found in the cytoplasm. Its function is as follows. A translational regulator that binds mRNA to regulate translation initiation and/or mRNA stability. Usually binds in the 5'-UTR at or near the Shine-Dalgarno sequence preventing ribosome-binding, thus repressing translation. Its main target seems to be the major flagellin gene, while its function is anatagonized by FliW. This Pseudarthrobacter chlorophenolicus (strain ATCC 700700 / DSM 12829 / CIP 107037 / JCM 12360 / KCTC 9906 / NCIMB 13794 / A6) (Arthrobacter chlorophenolicus) protein is Translational regulator CsrA.